A 207-amino-acid chain; its full sequence is Large ribosomal subunit protein bL25 (207 aa).

Residues 1-20 (MANHQIKAQRRKDEGKGASR) form a disordered region.

This sequence belongs to the bacterial ribosomal protein bL25 family. CTC subfamily. In terms of assembly, part of the 50S ribosomal subunit; part of the 5S rRNA/L5/L18/L25 subcomplex. Contacts the 5S rRNA. Binds to the 5S rRNA independently of L5 and L18.

This is one of the proteins that binds to the 5S RNA in the ribosome where it forms part of the central protuberance. This Xylella fastidiosa (strain M23) protein is Large ribosomal subunit protein bL25.